Here is a 576-residue protein sequence, read N- to C-terminus: Epsin-1 (576 aa).

The a 1,2-diacyl-sn-glycero-3-phospho-(1D-myo-inositol-4,5-bisphosphate) site is built by Arg-8, Lys-11, Arg-25, Asn-30, Arg-63, and His-73. An ENTH domain is found at 12–144; that stretch reads NIVHNYSEAE…RDEDRLREER (133 aa). The tract at residues 149 to 185 is disordered; sequence KTKEKLAQTATASSAAVGSGPPPEAEQAWPQSSGEEE. Residues 157–167 are compositionally biased toward low complexity; the sequence is TATASSAAVGS. UIM domains lie at 183 to 202, 208 to 227, and 233 to 252; these read EEELQLQLALAMSKEEADQP, EDDAQLQLALSLSREEHDKE, and GDDLRLQMAIEESKRETGGK. Low complexity predominate over residues 265 to 296; that stretch reads TAPAPAPTTDPWGGPAPMAAAVPTAAPTSDPW. A disordered region spans residues 265–404; it reads TAPAPAPTTD…GGFDTEPDEF (140 aa). Repeat copies occupy residues 274 to 276, 294 to 296, 306 to 308, 319 to 321, 332 to 334, 349 to 351, 367 to 369, and 377 to 379. Positions 274–379 are 8 X 3 AA repeats of [ED]-P-W; the sequence is DPWGGPAPMA…TPAPAFSDPW (106 aa). A compositionally biased stretch (pro residues) spans 297–314; the sequence is GGPPVPPAADPWGGPAPT. Over residues 332-368 the composition is skewed to low complexity; sequence DPWGGTPAPAAGEGPTPDPWGSSDGGVPVSGPSASDP. Ser-382 is subject to Phosphoserine; by CDK1. The [DE]-X(1,2)-F-X-X-[FL]-X-X-X-R motif motif lies at 402–411; that stretch reads DEFSDFDRLR. 5 positions are modified to phosphoserine: Ser-419, Ser-420, Ser-435, Ser-447, and Ser-454. The tract at residues 448-576 is disordered; sequence LAEAVGSPPP…PAPNTNPFLL (129 aa). Residues 454 to 468 show a composition bias toward pro residues; that stretch reads SPPPAATPTPTPPTR. 3 positions are modified to phosphothreonine: Thr-460, Thr-464, and Thr-470. Ser-473 carries the post-translational modification Phosphoserine. The residue at position 494 (Thr-494) is a Phosphothreonine. Repeat copies occupy residues 502–504 and 518–520. The 3 X 3 AA repeats of N-P-F stretch occupies residues 502–574; the sequence is NPFLPGGGPA…GPPAPNTNPF (73 aa). Arg-534 is subject to Omega-N-methylarginine. Over residues 557-570 the composition is skewed to pro residues; it reads GLPPMMPPGPPAPN. Residues 572-574 form repeat 3; sequence NPF.

The protein belongs to the epsin family. In terms of assembly, monomer. Binds clathrin, ZBTB16/ZNF145 and ITSN1. Binds ubiquitinated proteins. Binds AP2A1 and AP2A2. Interacts with RALBP1 in a complex also containing NUMB and TFAP2A during interphase and mitosis. Interacts with AP2B1. Interacts with UBQLN2. Interacts with REPS2; the interaction is direct. Interacts with EPS15; the interaction is direct. Interacts with ENTREP1. In terms of processing, phosphorylated on serine and/or threonine residues in mitotic cells. Phosphorylation reduces interaction with REPS2, AP-2 and the membrane fraction. Depolarization of synaptosomes results in dephosphorylation. Post-translationally, ubiquitinated.

The protein resides in the cytoplasm. Its subcellular location is the cell membrane. The protein localises to the nucleus. It is found in the membrane. It localises to the clathrin-coated pit. In terms of biological role, binds to membranes enriched in phosphatidylinositol 4,5-bisphosphate (PtdIns(4,5)P2). Modifies membrane curvature and facilitates the formation of clathrin-coated invaginations. Regulates receptor-mediated endocytosis. This is Epsin-1 (EPN1) from Homo sapiens (Human).